The chain runs to 490 residues: Protein nucleotidyltransferase YdiU (490 aa).

The ATP site is built by Gly94, Gly96, Arg97, Lys117, Asp129, Gly130, Arg180, and Arg187. The active-site Proton acceptor is Asp256. Mg(2+) is bound by residues Asn257 and Asp266. Asp266 is an ATP binding site.

It belongs to the SELO family. Mg(2+) serves as cofactor. Mn(2+) is required as a cofactor.

It catalyses the reaction L-seryl-[protein] + ATP = 3-O-(5'-adenylyl)-L-seryl-[protein] + diphosphate. The catalysed reaction is L-threonyl-[protein] + ATP = 3-O-(5'-adenylyl)-L-threonyl-[protein] + diphosphate. It carries out the reaction L-tyrosyl-[protein] + ATP = O-(5'-adenylyl)-L-tyrosyl-[protein] + diphosphate. The enzyme catalyses L-histidyl-[protein] + UTP = N(tele)-(5'-uridylyl)-L-histidyl-[protein] + diphosphate. It catalyses the reaction L-seryl-[protein] + UTP = O-(5'-uridylyl)-L-seryl-[protein] + diphosphate. The catalysed reaction is L-tyrosyl-[protein] + UTP = O-(5'-uridylyl)-L-tyrosyl-[protein] + diphosphate. Functionally, nucleotidyltransferase involved in the post-translational modification of proteins. It can catalyze the addition of adenosine monophosphate (AMP) or uridine monophosphate (UMP) to a protein, resulting in modifications known as AMPylation and UMPylation. This is Protein nucleotidyltransferase YdiU from Clostridium perfringens (strain 13 / Type A).